We begin with the raw amino-acid sequence, 529 residues long: Peptide chain release factor 3 (529 aa).

In terms of domain architecture, tr-type G spans 11 to 280; the sequence is AKRRTFAIIS…GLVEWAPAPM (270 aa). Residues 20–27, 88–92, and 142–145 contribute to the GTP site; these read SHPDAGKT, DTPGH, and NKLD.

This sequence belongs to the TRAFAC class translation factor GTPase superfamily. Classic translation factor GTPase family. PrfC subfamily.

The protein resides in the cytoplasm. Increases the formation of ribosomal termination complexes and stimulates activities of RF-1 and RF-2. It binds guanine nucleotides and has strong preference for UGA stop codons. It may interact directly with the ribosome. The stimulation of RF-1 and RF-2 is significantly reduced by GTP and GDP, but not by GMP. The protein is Peptide chain release factor 3 of Yersinia pestis bv. Antiqua (strain Antiqua).